The following is a 1411-amino-acid chain: DNA-directed RNA polymerase subunit beta' (1411 aa).

Zn(2+) contacts are provided by Cys-70, Cys-72, Cys-85, and Cys-88. Mg(2+) contacts are provided by Asp-458, Asp-460, and Asp-462. The Zn(2+) site is built by Cys-813, Cys-887, Cys-894, and Cys-897. The segment at Ala-1384 to Glu-1411 is disordered.

This sequence belongs to the RNA polymerase beta' chain family. In terms of assembly, the RNAP catalytic core consists of 2 alpha, 1 beta, 1 beta' and 1 omega subunit. When a sigma factor is associated with the core the holoenzyme is formed, which can initiate transcription. Mg(2+) is required as a cofactor. The cofactor is Zn(2+).

It catalyses the reaction RNA(n) + a ribonucleoside 5'-triphosphate = RNA(n+1) + diphosphate. In terms of biological role, DNA-dependent RNA polymerase catalyzes the transcription of DNA into RNA using the four ribonucleoside triphosphates as substrates. The chain is DNA-directed RNA polymerase subunit beta' from Paracidovorax citrulli (strain AAC00-1) (Acidovorax citrulli).